Consider the following 579-residue polypeptide: MSETLATDATAPAEKKDFIRQIVREDLASGKHTVIRTRFPPEPNGYLHIGHAKAICLDFGLAAEFGGLCNLRLDDTNPAKEDPEFVVAIQDDVRWLGYDWAQLRHASDYFQVYYLAAQKLIRDGHAFVCDLSAEQVRQYRGTLTEPGRNSPFRERSVEENLDLFARMRAGEFPDGARTLRAKIDMASGNINLRDPALYRIKHVEHQNTGNAWPIYPMYDFAHSLGDAVEGITHSLCTLEFEDHRPLYDWCVDKVDLVGHPELLQPLLDKGLPREAAKPRQIEFSRLNINYTVMSKRKLTALVEEQLVDGWDDPRMYTLQGLRRRGYTPAAMRLFVDRVGISKQNSLIDFSVLEGCLREDLDAAAPRRMAVIDPLKLVLTNLPEGHTETLQFSNHPKDDSFGTREVPFARELWIEREDFAEVPPKGWKRLVPGGEIRLRGAGIARVDEVIKNADGEIVELRGWLDPESRPGMEGANRKVKGTIHWVSAAHAVEAEIRLYDRLFSVEKPDDESEGKTYRDYLNPESKRNVRGYVEPSAAMAAPEQAFQFERTGYFVADRRDHSEATPVFNRSVTLRDTWAK.

Residues 41 to 51 (PEPNGYLHIGH) carry the 'HIGH' region motif. ATP is bound by residues 42–44 (EPN) and 48–54 (HIGHAKA). L-glutamine-binding residues include D74 and Y218. ATP contacts are provided by residues T237, 285-286 (RL), and 293-295 (MSK). The short motif at 292–296 (VMSKR) is the 'KMSKS' region element.

The protein belongs to the class-I aminoacyl-tRNA synthetase family. Monomer.

The protein resides in the cytoplasm. It catalyses the reaction tRNA(Gln) + L-glutamine + ATP = L-glutaminyl-tRNA(Gln) + AMP + diphosphate. The polypeptide is Glutamine--tRNA ligase (Xanthomonas axonopodis pv. citri (strain 306)).